A 194-amino-acid polypeptide reads, in one-letter code: Peptidyl-tRNA hydrolase (194 aa).

Residue Tyr-16 participates in tRNA binding. The active-site Proton acceptor is His-21. 3 residues coordinate tRNA: Phe-67, Asn-69, and Asn-115.

This sequence belongs to the PTH family. Monomer.

It is found in the cytoplasm. It catalyses the reaction an N-acyl-L-alpha-aminoacyl-tRNA + H2O = an N-acyl-L-amino acid + a tRNA + H(+). Functionally, hydrolyzes ribosome-free peptidyl-tRNAs (with 1 or more amino acids incorporated), which drop off the ribosome during protein synthesis, or as a result of ribosome stalling. Its function is as follows. Catalyzes the release of premature peptidyl moieties from peptidyl-tRNA molecules trapped in stalled 50S ribosomal subunits, and thus maintains levels of free tRNAs and 50S ribosomes. This is Peptidyl-tRNA hydrolase from Salmonella agona (strain SL483).